Consider the following 140-residue polypeptide: MKTSTALVLLLALTATSASSGDHQFIDEQNIMNVAEGKNVISSLSSSGGGDDAAAIMESVLVNGGNRKMVFMMVSGSQANCIPTGQPCGVLHQCCDGNFCTDPFYGTCTVKHCVPKGQPCGVLHPCCEGMCPDPIYGTCR.

An N-terminal signal peptide occupies residues 1–18 (MKTSTALVLLLALTATSA). Residues 19–78 (SSGDHQFIDEQNIMNVAEGKNVISSLSSSGGGDDAAAIMESVLVNGGNRKMVFMMVSGSQ) constitute a propeptide that is removed on maturation. Cystine bridges form between cysteine 81-cysteine 95, cysteine 88-cysteine 100, cysteine 94-cysteine 108, cysteine 113-cysteine 127, cysteine 120-cysteine 131, and cysteine 126-cysteine 139.

Belongs to the urticatoxin-2 family. Expressed in trichomes, that are stiff epidermal hairs located on the surface of petioles and leaves.

The protein localises to the secreted. Its function is as follows. Plant defense neurotoxin that causes pain and systemic symptoms in mammals via modulation of voltage-gated sodium channels (Nav). Potent modulator of human Nav1.5/SCN5A (EC(50)=55 nM), Nav1.6/SCN8A (EC(50)=0.86 nM), and Nav1.7/SCN9A (EC(50)=208 nM), where it shifts the activation threshold to more negative potentials and delays fast inactivation. Also shifts the voltage-dependence of steady-state fast inactivation of Nav1.6/SCN8A, but not that of Nav1.5/SCN5A or Nav1.7/SCN9A. On Nav1.7/SCN9A, principally acts by binding to extracellular loops of domain IV (Nav site 3). In vivo, intraplantar injection into mice causes numerous dose-dependent, immediate, and long-lasting spontaneous pain behaviors, while no swelling is observed in the injected paw. At the highest doses tested, systemic symptoms including hypokinesia and hypersalivation are observed. The polypeptide is Beta/delta-urticatoxin-De2a (Dendrocnide excelsa (Giant stinging tree)).